Consider the following 127-residue polypeptide: Apolipoprotein C-IV (127 aa).

Residues 1 to 27 (MSLLRNRLQDLPALCLCVLVLACIGAC) form the signal peptide. An N-linked (GlcNAc...) asparagine glycan is attached at asparagine 63.

Belongs to the apolipoprotein C4 family.

The protein localises to the secreted. Its function is as follows. May participate in lipoprotein metabolism. This chain is Apolipoprotein C-IV (APOC4), found in Colobus guereza (Mantled guereza).